The following is a 306-amino-acid chain: Glutaminase (306 aa).

Serine 64, asparagine 115, glutamate 159, asparagine 166, tyrosine 190, tyrosine 242, and valine 260 together coordinate substrate.

It belongs to the glutaminase family. Homotetramer.

The catalysed reaction is L-glutamine + H2O = L-glutamate + NH4(+). This chain is Glutaminase, found in Vibrio cholerae serotype O1 (strain ATCC 39315 / El Tor Inaba N16961).